Reading from the N-terminus, the 202-residue chain is Small ribosomal subunit protein uS4c (202 aa).

Positions 90–153 (MRLDNIIFRL…KSEAIISKNI (64 aa)) constitute an S4 RNA-binding domain.

The protein belongs to the universal ribosomal protein uS4 family. As to quaternary structure, part of the 30S ribosomal subunit. Contacts protein S5. The interaction surface between S4 and S5 is involved in control of translational fidelity.

Its subcellular location is the plastid. It is found in the chloroplast. One of the primary rRNA binding proteins, it binds directly to 16S rRNA where it nucleates assembly of the body of the 30S subunit. Its function is as follows. With S5 and S12 plays an important role in translational accuracy. The protein is Small ribosomal subunit protein uS4c (rps4) of Hookeria lucens (Moss).